The chain runs to 961 residues: MDDSENNAPSTPGSPGFSTDRLPPNTTTSRGATDPSSYSDDDDDDVVGAEEAEVDPNVLPEDDGVVAAEEEEDGEDLFNDNYLDDYRRMDEQDQYESVGLDDSIEDERNLDEIMADRRAAEAELDARDVRTGAAPDRKLPRMLHDQDTDEDMSFRRPKRHRANFRPPREPRTPRSDDDGDGATPSSPGRSQRGMYSGGDVPMTDQTDDDPYEDEFDEEDEMNMYRVQGTLREWVTRDEVRRFIAKKFKEFLLTYVNPKNEQGEFEYVRLINEMVLANKCSLEIDYKQFIYIHPNIAIWLADAPQSVIEVMEEVAKNVVFDLHKNYRNIHQKIYVRITNLPVYDQIRNIRQIHLNTMIRIGGVVTRRSGVFPQLQQVKYDCSKCGTVLGPFFQNSYTEVKVGSCPECQSKGPFTINVEQTIYRNYQKLTLQESPGIVPAGRLPRYKEVILLNDLIDCARPGEEIEVTGIYTNNFDLSLNTKNGFPVFATVVEANYVAKKQDLFSAYKLTDEDKAEIEKLAKDPRIGERIVKSIAPSIYGHEDIKTAIALAMFGGQEKNVKGKHRLRGDINVLLLGDPGTAKSQFLKYVEKTGHRAVYTTGKGASAVGLTAAVHKDPVTREWTLEGGALVLADRGICLIDEFDKMNDQDRVSIHEAMEQQSISISKAGIVTSLQARCSVIAAANPIGGRYDSSKTFTQNVELTDPIISRFDVLCVVKDIVDPFTDEMLARFVVDSHARSQPKGANLEDRVPTDVEDDPLAAARQADPDILSQDMLKKYITYAKLNVFPKIHDADLDKISHVYAELRRESSHGQGVPIAVRHIESIIRMSEAHARMHLRSYVSQEDVDMAIRVLLDSFISTQKFGVQKALQKNFRKYMTYKKDYNELLLLLLRTLVKDVLHFEEIVSGPTTRLTHIEVKVEDLKNKAQEYEIYDLRPFFSSAHFRDNNFVLDEGRGIIRHPLAA.

Positions M1–F17 are enriched in polar residues. 2 disordered regions span residues M1–N81 and A120–E220. A compositionally biased stretch (acidic residues) spans S39 to F78. Composition is skewed to basic and acidic residues over residues A120 to Q146 and P166 to D176. The span at Q205–E220 shows a compositional bias: acidic residues. A C4-type zinc finger spans residues C380–C406. The 207-residue stretch at I524 to V730 folds into the MCM domain. Residue G574 to S581 coordinates ATP. The Arginine finger motif lies at S706–D709.

Belongs to the MCM family. In terms of assembly, component of the minichromosome maintenance (MCM) complex, a heterotetramer composed of MCM2, MCM3, MCM4, MCM5, MCM6 and MCM7.

The protein resides in the nucleus. The enzyme catalyses ATP + H2O = ADP + phosphate + H(+). Probable component of the MCM2-7 complex (MCM complex) that may function as a DNA helicase and which is essential to undergo a single round of replication initiation and elongation per cell cycle in eukaryotic cells. This is DNA replication licensing factor MCM2 from Oryza sativa subsp. indica (Rice).